Here is an 836-residue protein sequence, read N- to C-terminus: Transcription factor vrtR2 (836 aa).

The segment covering 1–26 (MPSLSSKTSTMQRSCRPQMSACPNQQ) has biased composition (polar residues). The tract at residues 1-29 (MPSLSSKTSTMQRSCRPQMSACPNQQQKD) is disordered. The segment at residues 37 to 63 (CVLCRDRKLKCDKLDPCSNCTSSGVAC) is a DNA-binding region (zn(2)-C6 fungal-type). The tract at residues 72 to 114 (PRGRHARTVQTKASTPPDTRRRGSSNESTTAPAPDDGGLGTHI) is disordered. Over residues 79–88 (TVQTKASTPP) the composition is skewed to polar residues.

Its subcellular location is the nucleus. In terms of biological role, probable transcription factor that regulates expression of the gene cluster that mediates the biosynthesis of viridicatumtoxin, a tetracycline-like fungal meroterpenoid with a unique, fused spirobicyclic ring system. The sequence is that of Transcription factor vrtR2 from Penicillium aethiopicum.